Reading from the N-terminus, the 120-residue chain is NADH-ubiquinone oxidoreductase chain 3 (120 aa).

3 helical membrane-spanning segments follow: residues 7-27, 62-82, and 89-109; these read FVYI…LFFL, FYLV…LFPF, and MTLL…IGFI.

It belongs to the complex I subunit 3 family.

It is found in the mitochondrion membrane. It catalyses the reaction a ubiquinone + NADH + 5 H(+)(in) = a ubiquinol + NAD(+) + 4 H(+)(out). Functionally, core subunit of the mitochondrial membrane respiratory chain NADH dehydrogenase (Complex I) that is believed to belong to the minimal assembly required for catalysis. Complex I functions in the transfer of electrons from NADH to the respiratory chain. The immediate electron acceptor for the enzyme is believed to be ubiquinone. This chain is NADH-ubiquinone oxidoreductase chain 3 (nad3), found in Dictyostelium discoideum (Social amoeba).